Reading from the N-terminus, the 157-residue chain is NADPH-dependent 7-cyano-7-deazaguanine reductase (157 aa).

The Thioimide intermediate role is filled by cysteine 55. Aspartate 62 acts as the Proton donor in catalysis. Substrate is bound by residues 77–79 and 96–97; these read VES and HE.

Belongs to the GTP cyclohydrolase I family. QueF type 1 subfamily.

Its subcellular location is the cytoplasm. It catalyses the reaction 7-aminomethyl-7-carbaguanine + 2 NADP(+) = 7-cyano-7-deazaguanine + 2 NADPH + 3 H(+). It participates in tRNA modification; tRNA-queuosine biosynthesis. In terms of biological role, catalyzes the NADPH-dependent reduction of 7-cyano-7-deazaguanine (preQ0) to 7-aminomethyl-7-deazaguanine (preQ1). In Neisseria meningitidis serogroup C / serotype 2a (strain ATCC 700532 / DSM 15464 / FAM18), this protein is NADPH-dependent 7-cyano-7-deazaguanine reductase.